Here is a 141-residue protein sequence, read N- to C-terminus: Large ribosomal subunit protein uL16 (141 aa).

Belongs to the universal ribosomal protein uL16 family. As to quaternary structure, part of the 50S ribosomal subunit.

In terms of biological role, binds 23S rRNA and is also seen to make contacts with the A and possibly P site tRNAs. This chain is Large ribosomal subunit protein uL16, found in Campylobacter concisus (strain 13826).